We begin with the raw amino-acid sequence, 461 residues long: Carbamoyl phosphate synthase arginine-specific small chain (461 aa).

Residues 240 to 427 form the Glutamine amidotransferase type-1 domain; the sequence is HVALIDCGVK…LENVQMYKDN (188 aa). Cys-316 serves as the catalytic Nucleophile. Active-site residues include His-400 and Glu-402.

It belongs to the CarA family. As to quaternary structure, heterodimer composed of 2 chains; the small (or glutamine) chain promotes the hydrolysis of glutamine to ammonia, which is used by the large (or ammonia) chain to synthesize carbamoyl phosphate.

The protein resides in the cytoplasm. It carries out the reaction hydrogencarbonate + L-glutamine + 2 ATP + H2O = carbamoyl phosphate + L-glutamate + 2 ADP + phosphate + 2 H(+). The enzyme catalyses L-glutamine + H2O = L-glutamate + NH4(+). It participates in amino-acid biosynthesis; L-arginine biosynthesis; carbamoyl phosphate from bicarbonate: step 1/1. Its function is as follows. Small subunit of the arginine-specific carbamoyl phosphate synthase (CPSase). CPSase catalyzes the formation of carbamoyl phosphate from the ammonia moiety of glutamine, carbonate, and phosphate donated by ATP, constituting the first step of 2 biosynthetic pathways, one leading to arginine and/or urea and the other to pyrimidine nucleotides. The small subunit (glutamine amidotransferase) binds and cleaves glutamine to supply the large subunit with the substrate ammonia. In Chaetomium globosum (strain ATCC 6205 / CBS 148.51 / DSM 1962 / NBRC 6347 / NRRL 1970) (Soil fungus), this protein is Carbamoyl phosphate synthase arginine-specific small chain (CPA1).